Here is a 372-residue protein sequence, read N- to C-terminus: Alanine dehydrogenase 1 (372 aa).

Histidine 94 is a catalytic residue. 170–200 (TYVIFGGGVAATNAANVALGLNAKVIIIELN) contributes to the NAD(+) binding site.

Belongs to the AlaDH/PNT family.

It carries out the reaction L-alanine + NAD(+) + H2O = pyruvate + NH4(+) + NADH + H(+). It functions in the pathway amino-acid degradation; L-alanine degradation via dehydrogenase pathway; NH(3) and pyruvate from L-alanine: step 1/1. May play a role in cell wall synthesis as L-alanine is an important constituent of the peptidoglycan layer. In Staphylococcus aureus (strain USA300), this protein is Alanine dehydrogenase 1 (ald1).